The primary structure comprises 432 residues: D-amino acid dehydrogenase (432 aa).

Val3–Tyr17 is an FAD binding site.

Belongs to the DadA oxidoreductase family. It depends on FAD as a cofactor.

The catalysed reaction is a D-alpha-amino acid + A + H2O = a 2-oxocarboxylate + AH2 + NH4(+). It participates in amino-acid degradation; D-alanine degradation; NH(3) and pyruvate from D-alanine: step 1/1. Functionally, oxidative deamination of D-amino acids. The polypeptide is D-amino acid dehydrogenase (Delftia acidovorans (strain DSM 14801 / SPH-1)).